A 356-amino-acid polypeptide reads, in one-letter code: MGLLRIMMPPKLQLLAVVAFAVAMLFLENQIQKLEESRSKLERAIARHEVREIEQRHTMDGPRQDATLDEEEDMVIIYNRVPKTASTSFTNIAYDLCAKNKYHVLHINTTKNNPVMSLQDQVRFVKNITSWKEMKPGFYHGHVSYLDFAKFGVKKKPIYINVIRDPIERLVSYYYFLRFGDDYRPGLRRRKQGDKKTFDECVAEGGSDCAPEKLWLQIPFFCGHSSECWNVGSRWAMDQAKYNLINEYFLVGVTEELEDFIMLLEAALPRFFRGATELYRTGKKSHLRKTTEKKLPTKQTIAKLQQSDIWKMENEFYEFALEQFQFIRAHAVREKDGDLYILAQNFFYEKIYPKSN.

Residues 1 to 11 lie on the Cytoplasmic side of the membrane; sequence MGLLRIMMPPK. A helical; Signal-anchor for type II membrane protein membrane pass occupies residues 12–28; it reads LQLLAVVAFAVAMLFLE. Residues 24 to 51 are a coiled coil; that stretch reads MLFLENQIQKLEESRSKLERAIARHEVR. Over 29 to 356 the chain is Lumenal; sequence NQIQKLEESR…FYEKIYPKSN (328 aa). Lysine 83, threonine 84, alanine 85, serine 86, threonine 87, and serine 88 together coordinate adenosine 3',5'-bisphosphate. Residues asparagine 108 and asparagine 127 are each glycosylated (N-linked (GlcNAc...) asparagine). Residues histidine 140 and histidine 142 contribute to the active site. Positions 164 and 172 each coordinate adenosine 3',5'-bisphosphate. Disulfide bonds link cysteine 201–cysteine 209 and cysteine 222–cysteine 228. Adenosine 3',5'-bisphosphate-binding residues include tyrosine 279, serine 285, threonine 290, and lysine 293.

The protein belongs to the sulfotransferase 3 family. In terms of assembly, homotrimer. Interacts with the C5-epimerase GLCE. Post-translationally, N-glycosylated.

The protein localises to the golgi apparatus membrane. Catalyzes the transfer of a sulfo group from 3'-phospho-5'-adenylyl sulfate (PAPS) to the 2-OH position of iduronic acid (IdoA) or glucuronic acid (GlcA) within the heparan sulfate (HS) chain and participates in HS biosynthesis. Required for metanephric development of kidney formation, suggesting that 2-O-sulfation within HS is essential for signaling between ureteric bud and metanephric mesenchyme. This chain is Heparan sulfate 2-O-sulfotransferase 1, found in Homo sapiens (Human).